The chain runs to 369 residues: Aspartate-semialdehyde dehydrogenase (369 aa).

NADP(+) is bound by residues 11 to 14 (RGMV), 38 to 39 (TS), and Q75. Phosphate is bound at residue R104. The active-site Acyl-thioester intermediate is C137. Residue Q164 participates in substrate binding. NADP(+) is bound by residues 167 to 168 (SG) and P195. E243 contributes to the substrate binding site. K246 contributes to the phosphate binding site. R269 lines the substrate pocket. Catalysis depends on H276, which acts as the Proton acceptor. Q352 contacts NADP(+).

It belongs to the aspartate-semialdehyde dehydrogenase family. In terms of assembly, homodimer.

It carries out the reaction L-aspartate 4-semialdehyde + phosphate + NADP(+) = 4-phospho-L-aspartate + NADPH + H(+). Its pathway is amino-acid biosynthesis; L-lysine biosynthesis via DAP pathway; (S)-tetrahydrodipicolinate from L-aspartate: step 2/4. The protein operates within amino-acid biosynthesis; L-methionine biosynthesis via de novo pathway; L-homoserine from L-aspartate: step 2/3. It participates in amino-acid biosynthesis; L-threonine biosynthesis; L-threonine from L-aspartate: step 2/5. Its function is as follows. Catalyzes the NADPH-dependent formation of L-aspartate-semialdehyde (L-ASA) by the reductive dephosphorylation of L-aspartyl-4-phosphate. This Buchnera aphidicola subsp. Baizongia pistaciae (strain Bp) protein is Aspartate-semialdehyde dehydrogenase.